A 258-amino-acid polypeptide reads, in one-letter code: MLKTRVIPCLDVKDGRVVKGVQFLDLRDAGDPVEAAKAYDRAGADELCFLDITASHEARGILLDVVQRTAEACFMPLTVGGGVRTVEDIRALLLAGADKVSINTAAVNNPDFVAEAAEKFGAQCIVVAIDAKRVSGPGEPPRWEIFTHGGRRATGIDAVAFARTVTARGAGELLVTSMDRDGMRSGYDLGLTRAIADAVSVPVIASGGVGGLDDLVAGVAEGHASAVLAASIFHFGEATVAQAKAHMAAAGLAMRLDP.

Active-site residues include Asp11 and Asp130.

This sequence belongs to the HisA/HisF family. As to quaternary structure, heterodimer of HisH and HisF.

The protein localises to the cytoplasm. It catalyses the reaction 5-[(5-phospho-1-deoxy-D-ribulos-1-ylimino)methylamino]-1-(5-phospho-beta-D-ribosyl)imidazole-4-carboxamide + L-glutamine = D-erythro-1-(imidazol-4-yl)glycerol 3-phosphate + 5-amino-1-(5-phospho-beta-D-ribosyl)imidazole-4-carboxamide + L-glutamate + H(+). It functions in the pathway amino-acid biosynthesis; L-histidine biosynthesis; L-histidine from 5-phospho-alpha-D-ribose 1-diphosphate: step 5/9. Functionally, IGPS catalyzes the conversion of PRFAR and glutamine to IGP, AICAR and glutamate. The HisF subunit catalyzes the cyclization activity that produces IGP and AICAR from PRFAR using the ammonia provided by the HisH subunit. This is Imidazole glycerol phosphate synthase subunit HisF from Methylobacterium nodulans (strain LMG 21967 / CNCM I-2342 / ORS 2060).